Consider the following 96-residue polypeptide: MNYVNILEKSKNFIELELVNDDHSLSNLIKEVLLSKKGVILASYGVEHPVLDPDTGRYISNPRIMLKTDAKTDAEKVLKEALKDIVDLCNKTLKEL.

It belongs to the archaeal Rpo11/eukaryotic RPB11/RPC19 RNA polymerase subunit family. In terms of assembly, part of the RNA polymerase complex.

The protein localises to the cytoplasm. It carries out the reaction RNA(n) + a ribonucleoside 5'-triphosphate = RNA(n+1) + diphosphate. DNA-dependent RNA polymerase (RNAP) catalyzes the transcription of DNA into RNA using the four ribonucleoside triphosphates as substrates. This chain is DNA-directed RNA polymerase subunit Rpo11, found in Methanococcus maripaludis (strain C6 / ATCC BAA-1332).